Here is a 243-residue protein sequence, read N- to C-terminus: MTTSSEQPRTGYKRVMLKLGGEMFGGGKVGVDPDVVDNVARQIAEVAKTGAEIAVVIGGGNFFRGAELQQRGMDRARSDYMGMLGTVMNCLALQDFLGQHGVECRVQTAINMAQVAEPYLPLRAERHLEKGRVVIFGAGMGMPYFSTDTTAAQRALEIGCDVLLMAKAVDGVYSDDPRTNPDAELFTEITPKEVIEKGLKVADATAFSLCMDNKMPILVFNLLTEGNIARAISGERIGTLVES.

18 to 21 serves as a coordination point for ATP; it reads KLGG. UMP is bound at residue glycine 59. Residues glycine 60 and arginine 64 each coordinate ATP. Residues aspartate 79 and 140–147 each bind UMP; that span reads MGMPYFST. ATP is bound by residues tyrosine 173 and aspartate 176.

The protein belongs to the UMP kinase family. In terms of assembly, homohexamer.

It localises to the cytoplasm. The catalysed reaction is UMP + ATP = UDP + ADP. The protein operates within pyrimidine metabolism; CTP biosynthesis via de novo pathway; UDP from UMP (UMPK route): step 1/1. Inhibited by UTP. Functionally, catalyzes the reversible phosphorylation of UMP to UDP. This is Uridylate kinase from Corynebacterium glutamicum (strain R).